We begin with the raw amino-acid sequence, 300 residues long: uncharacterized protein (300 aa).

A compositionally biased stretch (basic and acidic residues) spans 1–19 (MATKRAHPEDETHESKRAA). The segment at 1–20 (MATKRAHPEDETHESKRAAQ) is disordered.

This is an uncharacterized protein from Orgyia pseudotsugata multicapsid polyhedrosis virus (OpMNPV).